A 278-amino-acid chain; its full sequence is Neuronal membrane glycoprotein M6-a (278 aa).

Residue Met-1 is modified to N-acetylmethionine. The Cytoplasmic segment spans residues 1–22; sequence MEENMEEGQTQKGCFECCIKCL. A helical membrane pass occupies residues 23 to 43; that stretch reads GGIPYASLIATILLYAGVALF. Topologically, residues 44 to 84 are extracellular; sequence CGCGHEALSGTVNILQTYFEMARTAGDTLDVFTMIDIFKYV. Residues 85–105 traverse the membrane as a helical segment; the sequence is IYGIAAAFFVYGILLMVEGFF. The Cytoplasmic segment spans residues 106–127; it reads TTGAIKDLYGDFKITTCGRCVS. A helical membrane pass occupies residues 128–148; that stretch reads AWFIMLTYLFMLAWLGVTAFT. The Extracellular portion of the chain corresponds to 149–213; sequence SLPVYMYFNL…STELNMTFHL (65 aa). N-linked (GlcNAc...) asparagine glycosylation occurs at Asn-164. Cys-174 and Cys-192 are disulfide-bonded. The N-linked (GlcNAc...) asparagine glycan is linked to Asn-208. A helical membrane pass occupies residues 214–234; it reads FIVALAGAGAAVIAMVHYLMV. Over 235–278 the chain is Cytoplasmic; that stretch reads LSANWAYVKDACRMQKYEDIKSKEEQELHDIHSTRSKERLNAYT. A Phosphoserine modification is found at Ser-256. At Thr-278 the chain carries Phosphothreonine.

The protein belongs to the myelin proteolipid protein family. Interacts with OPRM1. Interacts with palmitoyltransferase ZDHHC17/HIP14; the interaction leads to palmitoylation of GPM6A. Post-translationally, N-glycosylated. In terms of processing, palmitoylated by ZDHHC17/HIP14.

It is found in the cell membrane. It localises to the cell projection. Its subcellular location is the axon. The protein localises to the growth cone. The protein resides in the dendritic spine. It is found in the filopodium. It localises to the neuron projection. Involved in neuronal differentiation, including differentiation and migration of neuronal stem cells. Plays a role in neuronal plasticity and is involved in neurite and filopodia outgrowth, filopodia motility and probably synapse formation. GPM6A-induced filopodia formation involves mitogen-activated protein kinase (MAPK) and Src signaling pathways. May be involved in neuronal NGF-dependent Ca(2+) influx. May be involved in regulation of endocytosis and intracellular trafficking of G-protein-coupled receptors (GPCRs); may enhance internalization and recycling of mu-type opioid receptor. The protein is Neuronal membrane glycoprotein M6-a (GPM6A) of Bos taurus (Bovine).